The chain runs to 801 residues: Phenylalanine--tRNA ligase beta subunit (801 aa).

Residues 39–153 enclose the tRNA-binding domain; the sequence is AEGLSKLVVG…DEAVPGDAIF (115 aa). In terms of domain architecture, B5 spans 406–481; that stretch reads TEPVEVSTNL…RIYGYDKLPT (76 aa). Asp-459, Asp-465, Glu-468, and Glu-469 together coordinate Mg(2+). Positions 708-801 constitute an FDX-ACB domain; it reads TKFPAMTRDI…LTEQVGAEVR (94 aa).

The protein belongs to the phenylalanyl-tRNA synthetase beta subunit family. Type 1 subfamily. As to quaternary structure, tetramer of two alpha and two beta subunits. The cofactor is Mg(2+).

The protein localises to the cytoplasm. The enzyme catalyses tRNA(Phe) + L-phenylalanine + ATP = L-phenylalanyl-tRNA(Phe) + AMP + diphosphate + H(+). The protein is Phenylalanine--tRNA ligase beta subunit of Streptococcus pyogenes serotype M3 (strain SSI-1).